Consider the following 272-residue polypeptide: HTH-type transcriptional repressor AllR (272 aa).

The disordered stretch occupies residues 1–20 (MTEVRRRGRPGQQEPSAQKG). The HTH iclR-type domain maps to 21-83 (AQALERGIAI…SQLGWWHIGL (63 aa)). Positions 43-62 (VSDISLNLDLPLSTTFRLLK) form a DNA-binding region, H-T-H motif. The IclR-ED domain maps to 98–267 (VLSVGGPFMR…ARNISTALGL (170 aa)). Glyoxylate-binding positions include 154-156 (SGA), D207, C217, and 234-236 (SIS).

In terms of biological role, negative regulator of allantoin and glyoxylate utilization operons. Binds to the gcl promoter and to the allS-allA intergenic region. In Klebsiella pneumoniae, this protein is HTH-type transcriptional repressor AllR (allR).